A 34-amino-acid polypeptide reads, in one-letter code: Hemopexin (34 aa).

The segment at 1–25 is disordered; the sequence is RPLTQHKPHTPGDEHPHGAEPPGXD.

This sequence belongs to the hemopexin family. As to expression, expressed by the liver and secreted in plasma.

It localises to the secreted. Binds heme and transports it to the liver for breakdown and iron recovery, after which the free hemopexin returns to the circulation. The chain is Hemopexin (HPX) from Gallus gallus (Chicken).